A 199-amino-acid polypeptide reads, in one-letter code: Adenylyl-sulfate kinase (199 aa).

35 to 42 (GLSGSGKS) serves as a coordination point for ATP. Serine 109 (phosphoserine intermediate) is an active-site residue.

Belongs to the APS kinase family.

It carries out the reaction adenosine 5'-phosphosulfate + ATP = 3'-phosphoadenylyl sulfate + ADP + H(+). Its pathway is sulfur metabolism; hydrogen sulfide biosynthesis; sulfite from sulfate: step 2/3. Functionally, catalyzes the synthesis of activated sulfate. The sequence is that of Adenylyl-sulfate kinase from Clostridium kluyveri (strain ATCC 8527 / DSM 555 / NBRC 12016 / NCIMB 10680 / K1).